The sequence spans 614 residues: MALRARALYDFKSENPGEISLREHEVLSLCSEQDIEGWLEGINSRGDRGLFPASYVQVIRAPEPGPPADGGPGAPARYANVPPGGFEPLPAAPPAAFPPLLQPQASPGSFQPPGAGFPYGGGALQPSPQQLYGGYQASLGSDDDWDDEWDDSSTVADEPGALGSGAYPDLDGSSSAGGGAAGRYRLSTRSDLSLGSRGVSAPPAPSVWSQELGHGEPQPQSLLHLRQVGRGGLRAGRGVRLREGWGQAVRGAGSYGPEWQENPYPFQCTIDDPTKQTKFKGMKSYISYKLVPTHTQVPVHRRYKHFDWLYARLAEKFPVISVPHLPEKQATGRFEEDFISKRRKGLIWWMNHMASHPVLAQCDVFQHFLTCPSSTDEKAWKQGKRKAEKDEMVGANFFLTLSTPPAAALDLQEVESKIDGFKCFTKKMDDSALQLNHTANEFARKQVTGFKKEYQKVGQSFRGLSQAFELDQQAFSVGLNQAIAFTGDAYDAIGELFAEQPRQDLDPVMDLLALYQGHLANFPDIIHVQKGALTKVKESRRHVEEGKMEVQKADGIQDRCNTISFATLAEIHHFHQIRVRDFKSQMQHFLQQQIIFFQKVTQKLEEALHKYDSV.

The SH3 domain maps to 1–61 (MALRARALYD…PASYVQVIRA (61 aa)). Residues 85–218 (GFEPLPAAPP…SQELGHGEPQ (134 aa)) form a disordered region. The segment covering 90 to 101 (PAAPPAAFPPLL) has biased composition (pro residues). Over residues 141 to 151 (SDDDWDDEWDD) the composition is skewed to acidic residues. The region spanning 266–376 (FQCTIDDPTK…HFLTCPSSTD (111 aa)) is the PX domain. Residues Arg302, Lys304, and Arg342 each coordinate a 1,2-diacyl-sn-glycero-3-phospho-(1D-myo-inositol-4,5-bisphosphate). The region spanning 411–614 (LQEVESKIDG…EEALHKYDSV (204 aa)) is the BAR domain.

The protein belongs to the sorting nexin family. As to quaternary structure, heterodimer with SNX9. Interacts with ITCH. Interacts with dynamin-2 (DNM2), SYNJ1 and WASL. Interacts with the AP-1 complex. Interacts with FCHSD1 (via the F-BAR domain).

It is found in the endomembrane system. The protein localises to the endosome membrane. The protein resides in the recycling endosome membrane. It localises to the cell membrane. Its subcellular location is the cytoplasmic vesicle membrane. Involved in endocytosis and intracellular vesicle trafficking, both during interphase and at the end of mitosis. Required for efficient progress through mitosis and cytokinesis. Required for normal formation of the cleavage furrow at the end of mitosis. Plays a role in endocytosis via clathrin-coated pits, but also clathrin-independent, actin-dependent fluid-phase endocytosis. Plays a role in macropinocytosis. Binds to membranes enriched in phosphatidylinositol 4,5-bisphosphate and promotes membrane tubulation. Stimulates the GTPase activity of DNM2. Promotes DNM2 location at the plasma membrane. Together with DNM2, involved in autophagosome assembly by regulating trafficking from recycling endosomes of phospholipid scramblase ATG9A. This Mus musculus (Mouse) protein is Sorting nexin-18.